The primary structure comprises 132 residues: NADH-quinone oxidoreductase subunit A (132 aa).

The next 3 helical transmembrane spans lie at 14–34 (FFTFFFIAVSICVFMLSISWI), 66–86 (FYLVAIYFVLFDVEALYLYAW), and 96–116 (IGFIEALIFILFLLSGLIYLI).

Belongs to the complex I subunit 3 family. In terms of assembly, NDH-1 is composed of 13 different subunits. Subunits NuoA, H, J, K, L, M, N constitute the membrane sector of the complex.

Its subcellular location is the cell membrane. The catalysed reaction is a quinone + NADH + 5 H(+)(in) = a quinol + NAD(+) + 4 H(+)(out). Its function is as follows. NDH-1 shuttles electrons from NADH, via FMN and iron-sulfur (Fe-S) centers, to quinones in the respiratory chain. The immediate electron acceptor for the enzyme in this species is believed to be ubiquinone. Couples the redox reaction to proton translocation (for every two electrons transferred, four hydrogen ions are translocated across the cytoplasmic membrane), and thus conserves the redox energy in a proton gradient. This is NADH-quinone oxidoreductase subunit A from Buchnera aphidicola subsp. Baizongia pistaciae (strain Bp).